A 159-amino-acid polypeptide reads, in one-letter code: Globin C, coelomic (159 aa).

N-acetylglycine is present on G2. The Globin domain occupies 12–158 (DLTLAQKKIV…VQAVLLVKHG (147 aa)). 2 residues coordinate heme b: H74 and H105.

This sequence belongs to the globin family. In terms of assembly, monomer.

In Molpadia arenicola (Sea cucumber), this protein is Globin C, coelomic.